A 415-amino-acid polypeptide reads, in one-letter code: Serine hydroxymethyltransferase (415 aa).

(6S)-5,6,7,8-tetrahydrofolate contacts are provided by residues leucine 122 and 126–128; that span reads GHL. The residue at position 230 (lysine 230) is an N6-(pyridoxal phosphate)lysine.

This sequence belongs to the SHMT family. Homodimer. Pyridoxal 5'-phosphate is required as a cofactor.

It is found in the cytoplasm. It catalyses the reaction (6R)-5,10-methylene-5,6,7,8-tetrahydrofolate + glycine + H2O = (6S)-5,6,7,8-tetrahydrofolate + L-serine. The protein operates within one-carbon metabolism; tetrahydrofolate interconversion. Its pathway is amino-acid biosynthesis; glycine biosynthesis; glycine from L-serine: step 1/1. In terms of biological role, catalyzes the reversible interconversion of serine and glycine with tetrahydrofolate (THF) serving as the one-carbon carrier. This reaction serves as the major source of one-carbon groups required for the biosynthesis of purines, thymidylate, methionine, and other important biomolecules. Also exhibits THF-independent aldolase activity toward beta-hydroxyamino acids, producing glycine and aldehydes, via a retro-aldol mechanism. This Cupriavidus taiwanensis (strain DSM 17343 / BCRC 17206 / CCUG 44338 / CIP 107171 / LMG 19424 / R1) (Ralstonia taiwanensis (strain LMG 19424)) protein is Serine hydroxymethyltransferase.